We begin with the raw amino-acid sequence, 576 residues long: V-type ATP synthase alpha chain (576 aa).

238 to 245 is an ATP binding site; the sequence is GPFGAGKT.

It belongs to the ATPase alpha/beta chains family.

It carries out the reaction ATP + H2O + 4 H(+)(in) = ADP + phosphate + 5 H(+)(out). Produces ATP from ADP in the presence of a proton gradient across the membrane. The V-type alpha chain is a catalytic subunit. The sequence is that of V-type ATP synthase alpha chain from Borrelia duttonii (strain Ly).